The chain runs to 341 residues: Biotin synthase (341 aa).

The Radical SAM core domain maps to 39-263; sequence EQVQLCTLLS…VAVARITMPL (225 aa). Positions 54, 58, and 61 each coordinate [4Fe-4S] cluster. The [2Fe-2S] cluster site is built by cysteine 98, cysteine 129, cysteine 189, and arginine 267.

It belongs to the radical SAM superfamily. Biotin synthase family. Homodimer. [4Fe-4S] cluster is required as a cofactor. It depends on [2Fe-2S] cluster as a cofactor.

The catalysed reaction is (4R,5S)-dethiobiotin + (sulfur carrier)-SH + 2 reduced [2Fe-2S]-[ferredoxin] + 2 S-adenosyl-L-methionine = (sulfur carrier)-H + biotin + 2 5'-deoxyadenosine + 2 L-methionine + 2 oxidized [2Fe-2S]-[ferredoxin]. It functions in the pathway cofactor biosynthesis; biotin biosynthesis; biotin from 7,8-diaminononanoate: step 2/2. Functionally, catalyzes the conversion of dethiobiotin (DTB) to biotin by the insertion of a sulfur atom into dethiobiotin via a radical-based mechanism. The chain is Biotin synthase from Erythrobacter litoralis (strain HTCC2594).